A 308-amino-acid polypeptide reads, in one-letter code: Aspartate carbamoyltransferase catalytic subunit (308 aa).

Positions 55 and 56 each coordinate carbamoyl phosphate. Position 83 (lysine 83) interacts with L-aspartate. Residues arginine 105, histidine 133, and glutamine 136 each contribute to the carbamoyl phosphate site. Arginine 166 and arginine 220 together coordinate L-aspartate. Glycine 261 and proline 262 together coordinate carbamoyl phosphate.

It belongs to the aspartate/ornithine carbamoyltransferase superfamily. ATCase family. Heterododecamer (2C3:3R2) of six catalytic PyrB chains organized as two trimers (C3), and six regulatory PyrI chains organized as three dimers (R2).

It carries out the reaction carbamoyl phosphate + L-aspartate = N-carbamoyl-L-aspartate + phosphate + H(+). Its pathway is pyrimidine metabolism; UMP biosynthesis via de novo pathway; (S)-dihydroorotate from bicarbonate: step 2/3. Functionally, catalyzes the condensation of carbamoyl phosphate and aspartate to form carbamoyl aspartate and inorganic phosphate, the committed step in the de novo pyrimidine nucleotide biosynthesis pathway. This chain is Aspartate carbamoyltransferase catalytic subunit, found in Chlorobium phaeobacteroides (strain DSM 266 / SMG 266 / 2430).